We begin with the raw amino-acid sequence, 466 residues long: Acetylcholine-gated chloride channel subunit acc-1 (466 aa).

A signal peptide spans 1-24 (MSHPGWIMVSFLTELLSQSSKGIA). Residues 25-242 (QSLDNCANDT…FVFERRYGWY (218 aa)) lie on the Extracellular side of the membrane. Asn-32, Asn-102, and Asn-143 each carry an N-linked (GlcNAc...) asparagine glycan. A disulfide bond links Cys-158 and Cys-172. N-linked (GlcNAc...) asparagine glycosylation is present at Asn-211. A helical transmembrane segment spans residues 243 to 263 (VLQGYIPTMVTIVISWISFYL). The Cytoplasmic segment spans residues 264–272 (GPRAIPART). Residues 273-290 (MLGVNSLLAMTFQFGNII) traverse the membrane as a helical segment. The Extracellular segment spans residues 291–304 (RNLPRVSYVKAIDV). Residues 305–325 (WMLSGMLFIFLSLLELAVVGF) traverse the membrane as a helical segment. At 326–427 (MSRNEGLPPK…MRELRPETVD (102 aa)) the chain is on the cytoplasmic side. Residues 333–352 (PPKVKKRKRQEDDDEGFSWK) form a disordered region. The chain crosses the membrane as a helical span at residues 428–448 (FYSAIFFPTAYMLFNISYWSF). Residues 449-466 (YLTSLSEYFDEDVNIDQP) lie on the Extracellular side of the membrane.

It belongs to the ligand-gated ion channel (TC 1.A.9) family. Homopentamer (in vitro). Forms heteropentamers composed of acc-1 and acc-4 or acc-1 and acc-3. Both homopentamers and heteropentamers form functional ion channels. In terms of tissue distribution, expressed in a subset of cholinergic motor neurons including cholinergic motor neurons in the ventral cord, the retrovesicular ganglion and in head neurons such as the SMD, RMD motor neurons, the AVA and AVE command interneurons and the SAA neurons. Also expressed in a small number of glutamatergic neurons including the pharyngeal neurons MI and M3, the PLM neurons and a pair of neurons in the lateral ganglion.

It is found in the cell membrane. Acetylcholine-gated chloride channel subunit. Forms functional homopentameric (in vitro) and functional heteropentameric ion channels with acc-3 and acc-4 ion channel subunits. Currents in channels are triggered in response to acetylcholine, but not in response to GABA, glutamate, glycine, histamine or dopamine. This Caenorhabditis elegans protein is Acetylcholine-gated chloride channel subunit acc-1.